The primary structure comprises 384 residues: Alanine racemase (384 aa).

Lysine 39 serves as the catalytic Proton acceptor; specific for D-alanine. At lysine 39 the chain carries N6-(pyridoxal phosphate)lysine. Arginine 138 is a binding site for substrate. The active-site Proton acceptor; specific for L-alanine is tyrosine 265. Residue methionine 312 participates in substrate binding.

The protein belongs to the alanine racemase family. Pyridoxal 5'-phosphate serves as cofactor.

It carries out the reaction L-alanine = D-alanine. The protein operates within amino-acid biosynthesis; D-alanine biosynthesis; D-alanine from L-alanine: step 1/1. Catalyzes the interconversion of L-alanine and D-alanine. May also act on other amino acids. The polypeptide is Alanine racemase (alr) (Staphylococcus carnosus (strain TM300)).